The sequence spans 361 residues: 4-hydroxytryptamine kinase (361 aa).

ATP-binding positions include Asn37, Lys57, and 118-120 (QDV). Asp224 is a catalytic residue. Residue 248-250 (DWE) coordinates ATP.

The protein belongs to the methylthioribose kinase family. In terms of assembly, monomer. Requires Mg(2+) as cofactor.

It catalyses the reaction 4-hydroxytryptamine + ATP = norbaeocystin + ADP + H(+). The enzyme catalyses psilocin + ATP = psilocybin + ADP + H(+). It carries out the reaction 4-hydroxy-N,N,N-trimethyltryptamine + ATP = aeruginascin + ADP + H(+). It participates in secondary metabolite biosynthesis. Functionally, 4-hydroxytryptamine kinase; part of the gene cluster that mediates the biosynthesis of psilocybin, a psychotropic tryptamine-derived natural product. The first step in the pathway is the decarboxylation of L-tryptophan to tryptamine by the decarboxylase psiD. PsiD does not decarboxylate phenylalanine, tyrosine, or 5-hydroxy- L -tryptophan (5-HTP). 4-hydroxy-L-tryptophan is accepted as substrate by psiD as well. The cytochrome P450 monooxygenase psiH then converts tryptamine to 4-hydroxytryptamine. The kinase psiK catalyzes the 4-O-phosphorylation step by converting 4-hydroxytryptamine into norbaeocystin. The methyltransferase psiM then catalyzes iterative methyl transfer to the amino group of norbaeocystin to yield psilocybin via a monomethylated intermediate, baeocystin. 4-hydroxy-6-methyl-l-tryptophancan also be converted the decarboxylase PsiD, kinase PsiK, and methyltransferase PsiM into respectively 6-methyl-norbaeocystin, 6-methylbaeocystin, and 6-methylpsilocybin. PsiK kinase can also turn psilocin into psilocybin. This activity may represent a protective mechanism to rephosphorylate the unstable psilocin to the stable psilocybin in case of intracellular ester cleavage. Moreover, psiK is able to O-phosphorylate the quaternary amine 4-hydroxy-N,N,N-trimethyltryptamine (4-OH-TMT) to yield aeruginascin, another bioactive compound found in Psilocybe species. The polypeptide is 4-hydroxytryptamine kinase (Psilocybe cyanescens).